A 433-amino-acid polypeptide reads, in one-letter code: Phosphoglycerate kinase, chloroplastic (433 aa).

A chloroplast-targeting transit peptide spans glycine 1–serine 28. 11 residues coordinate (2R)-3-phosphoglycerate: alanine 51, aspartate 52, asparagine 54, arginine 68, serine 90, histidine 91, glycine 93, arginine 94, arginine 149, histidine 181, and arginine 182. Glycine 227 contributes to the ADP binding site. Glycine 227 lines the CDP pocket. AMP-binding residues include lysine 229 and lysine 233. Lysine 233 lines the ATP pocket. Position 251 (glycine 251) interacts with ADP. Glycine 251 serves as a coordination point for CDP. Positions 252 and 324 each coordinate AMP. Positions 252 and 324 each coordinate ATP. Residues glycine 349 and phenylalanine 354 each coordinate CDP. Residue phenylalanine 354 participates in ADP binding. Glutamate 355 is an AMP binding site. The ATP site is built by glutamate 355, aspartate 386, and serine 387. A Mg(2+)-binding site is contributed by aspartate 386.

This sequence belongs to the phosphoglycerate kinase family. As to quaternary structure, monomer. Requires Mg(2+) as cofactor.

Its subcellular location is the plastid. The protein localises to the chloroplast. The catalysed reaction is (2R)-3-phosphoglycerate + ATP = (2R)-3-phospho-glyceroyl phosphate + ADP. It functions in the pathway carbohydrate biosynthesis; Calvin cycle. In Spinacia oleracea (Spinach), this protein is Phosphoglycerate kinase, chloroplastic.